A 118-amino-acid polypeptide reads, in one-letter code: Small ribosomal subunit protein uS13 (118 aa).

The tract at residues 94 to 118 is disordered; it reads NLPVRGQNTKNNARTRKGPIRSIKR. Residues 106 to 118 show a composition bias toward basic residues; that stretch reads ARTRKGPIRSIKR.

It belongs to the universal ribosomal protein uS13 family. Part of the 30S ribosomal subunit. Forms a loose heterodimer with protein S19. Forms two bridges to the 50S subunit in the 70S ribosome.

Its function is as follows. Located at the top of the head of the 30S subunit, it contacts several helices of the 16S rRNA. In the 70S ribosome it contacts the 23S rRNA (bridge B1a) and protein L5 of the 50S subunit (bridge B1b), connecting the 2 subunits; these bridges are implicated in subunit movement. Contacts the tRNAs in the A and P-sites. This Psychrobacter sp. (strain PRwf-1) protein is Small ribosomal subunit protein uS13.